Here is a 101-residue protein sequence, read N- to C-terminus: Large ribosomal subunit protein uL23 (101 aa).

Belongs to the universal ribosomal protein uL23 family. As to quaternary structure, part of the 50S ribosomal subunit. Contacts protein L29, and trigger factor when it is bound to the ribosome.

Functionally, one of the early assembly proteins it binds 23S rRNA. One of the proteins that surrounds the polypeptide exit tunnel on the outside of the ribosome. Forms the main docking site for trigger factor binding to the ribosome. This is Large ribosomal subunit protein uL23 from Kocuria rhizophila (strain ATCC 9341 / DSM 348 / NBRC 103217 / DC2201).